We begin with the raw amino-acid sequence, 194 residues long: Chromophore lyase CpcT/CpeT 1 (194 aa).

Belongs to the CpcT/CpeT biliprotein lyase family.

Its function is as follows. Covalently attaches a chromophore to Cys residue(s) of phycobiliproteins. This Microcystis aeruginosa (strain NIES-843 / IAM M-2473) protein is Chromophore lyase CpcT/CpeT 1.